Consider the following 398-residue polypeptide: Streptopain (398 aa).

Positions 1–27 (MNKKKLGVRLLSLLALGGFVLANPVFA) are cleaved as a signal peptide. The propeptide occupies 28 to 145 (DQNFARNEKE…TTYAGTAEIK (118 aa)). Residue cysteine 192 is the Nucleophile of the active site. A Cysteine methyl disulfide; in zymogen form modification is found at cysteine 192. A protein is bound by residues serine 282 and glycine 339. Residue histidine 340 is the Proton acceptor of the active site. The C-terminal active site loop stretch occupies residues 368 to 390 (RLDALNPSALGTGGGAGGFNGYQ).

Belongs to the peptidase C10 family. Monomer. The mature protease is derived from the precursor sequence by cleavage, either in cis via an autocatalytic mechanism, or in trans by mature SpeB or host proteases (trypsin, plasmin or subtilisin). Maturation can involve a number of protein cleavage intermediates. Mature SpeB probably plays the most important role in protein maturation in physiological conditions. Post-translationally, methylthiolation at Cys-192 of the inactive zymogen form is probably involved in the mechanism of secretion of the proteinase into the culture fluid.

It is found in the secreted. The protein localises to the host extracellular space. It localises to the host cytoplasm. It carries out the reaction Preferential cleavage with hydrophobic residues at P2, P1 and P1'.. Synthesized as an inactive zymogen to protect the intracellular components of the bacteria from proteolytic activity during protein production. Once secreted into the extracellular milieu, cleaved into the active protease: maturation can be mediated in cis by autocatalytic cleavage, or in trans by mature SpeB or host proteases. Protease activity is strongly inhibited by zinc and copper, which prevent its maturation into an active protease: inhibition by metal ions may be required to prevent proteolysis of streptococcal proteins. Its function is as follows. Cysteine protease that acts as a key streptococcal virulence factor by cleaving host proteins involved in immune response. Triggers inflammation by mediating cleavage of host proteins, which can both promote host pathogenesis by triggering sterile inflammation and/or restrict streptococcal infection, depending on host immune statue and infection site. Cleaves host gasdermin-A (GSDMA) in epithelial cells, promoting GSDMA activation and formation of gasdermin pores, triggering pyroptosis. Pyroptosis triggers the elimination of the infected skin cell, depriving the pathogen of its protective niche, while inducing an inflammatory response. This ultimately prevents bacterial penetration of the epithelial barrier and a subsequent systemic dissemination of the pathogen. Also mediates cleavage of the cytokine precursor interleukin-1 beta (IL1B) to its mature form, resulting in inflammation and septic shock. SpeB-mediated maturation of IL1B plays a dual role depending on infection site: while IL1B inflammatory response prevents bacterial growth during invasive skin infections, it promotes streptococcal infection of the nasopharynx by disrupting colonization resistance mediated by the microbiota. Inhibits host autophagy be catalyzing cleavage and inactivation of key autophagy factors, such as CALCOCO2, NBR1 and SQSTM1. Cleaves and inhibits a number of complement factors, such as C2, C3-beta chain of C3, C4, C5 or SERPING1, thereby promoting evasion of host immunity. May also impair adaptive immunity by catalyzing cleavage and degradation of host immunoglobulins to promote immune system evasion; the relevance of this activity is however unsure in vivo. Catalyzes maturation and release of the peptide hormone bradykinin from the precursor Kininogen-1 (KNG1) to produce hypotension during septic shock. Also involved in bacterial translocation across the host epithelial barrier by mediating cleavage and degradation of host epithelial junction proteins, such as CDH1 and OCLN. Additionally, has been involved in degradation of fibronectin and vitronectin, two host extracellular matrix proteins involved in tissue integrity. Also able to catalyze cleavage and degradation of streptococcal proteins, such as C5a peptidase, EndoS or SmeZ. Degradation of streptococcal proteins is however strictly regulated to preserve integrity of other virulence factors. The polypeptide is Streptopain (Streptococcus pyogenes serotype M1).